Reading from the N-terminus, the 428-residue chain is Trigger factor (428 aa).

The PPIase FKBP-type domain occupies 163 to 248 (GDMVIIDYKG…IHEIKEKEVP (86 aa)).

It belongs to the FKBP-type PPIase family. Tig subfamily.

Its subcellular location is the cytoplasm. It catalyses the reaction [protein]-peptidylproline (omega=180) = [protein]-peptidylproline (omega=0). Its function is as follows. Involved in protein export. Acts as a chaperone by maintaining the newly synthesized protein in an open conformation. Functions as a peptidyl-prolyl cis-trans isomerase. This is Trigger factor from Alkaliphilus oremlandii (strain OhILAs) (Clostridium oremlandii (strain OhILAs)).